The following is a 224-amino-acid chain: Ras-related protein Rab-32C (224 aa).

The segment at 1–22 is disordered; it reads MYSNKNDKDKDKDQNNENNKNN. 35–42 is a GTP binding site; it reads GKLACGKT. The short motif at 57–65 is the Effector region element; that stretch reads YKPTIGVDF. Residues 83-87 and 142-145 contribute to the GTP site; these read DIAGQ and NKCD. Residues 203–224 are disordered; the sequence is GFKLSDQSQSTETTPTQSKTCC. A compositionally biased stretch (low complexity) spans 209 to 224; sequence QSQSTETTPTQSKTCC. 2 S-geranylgeranyl cysteine lipidation sites follow: Cys-223 and Cys-224.

Belongs to the small GTPase superfamily. Rab family.

This chain is Ras-related protein Rab-32C (rab32C), found in Dictyostelium discoideum (Social amoeba).